We begin with the raw amino-acid sequence, 153 residues long: Insulin-like growth factor 1 (153 aa).

The b stretch occupies residues 49 to 77 (GPETLCGAELVDALQFVCGPRGFYFNKPT). Disulfide bonds link Cys-54/Cys-96, Cys-66/Cys-109, and Cys-95/Cys-100. The tract at residues 78 to 89 (GYGSSIRRAPQT) is c. The a stretch occupies residues 90–110 (GIVDECCFRSCDLRRLEMYCA). The segment at 111-118 (PLKPTKSA) is d. Positions 119 to 153 (RSIRAQRHTDMPKTQKEVHLKNTSRGSAGNKTYRM) are cleaved as a propeptide — e peptide. A disordered region spans residues 119–153 (RSIRAQRHTDMPKTQKEVHLKNTSRGSAGNKTYRM). Positions 125–138 (RHTDMPKTQKEVHL) are enriched in basic and acidic residues. A compositionally biased stretch (polar residues) spans 139 to 153 (KNTSRGSAGNKTYRM).

Belongs to the insulin family. Forms a ternary complex with IGFR1 and ITGAV:ITGB3. Forms a ternary complex with IGFR1 and ITGA6:ITGB4. Forms a ternary complex with IGFBP3 and ALS.

The protein localises to the secreted. Its function is as follows. The insulin-like growth factors, isolated from plasma, are structurally and functionally related to insulin but have a much higher growth-promoting activity. May be a physiological regulator of [1-14C]-2-deoxy-D-glucose (2DG) transport and glycogen synthesis in osteoblasts. Stimulates glucose transport in bone-derived osteoblastic (PyMS) cells and is effective at much lower concentrations than insulin, not only regarding glycogen and DNA synthesis but also with regard to enhancing glucose uptake. May play a role in synapse maturation. Ca(2+)-dependent exocytosis of IGF1 is required for sensory perception of smell in the olfactory bulb. Acts as a ligand for IGF1R. Binds to the alpha subunit of IGF1R, leading to the activation of the intrinsic tyrosine kinase activity which autophosphorylates tyrosine residues in the beta subunit thus initiating a cascade of down-stream signaling events leading to activation of the PI3K-AKT/PKB and the Ras-MAPK pathways. Binds to integrins ITGAV:ITGB3 and ITGA6:ITGB4. Its binding to integrins and subsequent ternary complex formation with integrins and IGFR1 are essential for IGF1 signaling. Induces the phosphorylation and activation of IGFR1, MAPK3/ERK1, MAPK1/ERK2 and AKT1. As part of the MAPK/ERK signaling pathway, acts as a negative regulator of apoptosis in cardiomyocytes via promotion of STUB1/CHIP-mediated ubiquitination and degradation of ICER-type isoforms of CREM. The protein is Insulin-like growth factor 1 of Rattus norvegicus (Rat).